Reading from the N-terminus, the 266-residue chain is UPF0246 protein PHZ_c0561 (266 aa).

The segment at 245–266 (DEEFTFARPQPPPPAASRNKED) is disordered.

Belongs to the UPF0246 family.

The sequence is that of UPF0246 protein PHZ_c0561 from Phenylobacterium zucineum (strain HLK1).